The chain runs to 575 residues: Septation ring formation regulator EzrA (575 aa).

At 1–8 (MSNGQLIY) the chain is on the extracellular side. Residues 9–27 (LMVAIAVILVLAYVVAIFL) form a helical membrane-spanning segment. The Cytoplasmic segment spans residues 28–575 (RKRNEGRLEA…YEKTRETIRF (548 aa)). Coiled coils occupy residues 110–191 (QIDQ…FVTL), 265–301 (LYEA…LYDI), 354–416 (VRRI…IEKD), and 456–526 (TASN…IQEA).

Belongs to the EzrA family.

It localises to the cell membrane. Functionally, negative regulator of FtsZ ring formation; modulates the frequency and position of FtsZ ring formation. Inhibits FtsZ ring formation at polar sites. Interacts either with FtsZ or with one of its binding partners to promote depolymerization. The polypeptide is Septation ring formation regulator EzrA (Streptococcus pneumoniae (strain JJA)).